The sequence spans 200 residues: Protein GrpE (200 aa).

Residues 1–10 show a composition bias toward basic and acidic residues; the sequence is MQEKDSKDVT. The segment at 1 to 57 is disordered; the sequence is MQEKDSKDVTMEDEETIASQEEIEVEGNSEESSKEEESNNSEISDENLSEENLKLKD. Positions 11–29 are enriched in acidic residues; the sequence is MEDEETIASQEEIEVEGNS.

This sequence belongs to the GrpE family. As to quaternary structure, homodimer.

Its subcellular location is the cytoplasm. Participates actively in the response to hyperosmotic and heat shock by preventing the aggregation of stress-denatured proteins, in association with DnaK and GrpE. It is the nucleotide exchange factor for DnaK and may function as a thermosensor. Unfolded proteins bind initially to DnaJ; upon interaction with the DnaJ-bound protein, DnaK hydrolyzes its bound ATP, resulting in the formation of a stable complex. GrpE releases ADP from DnaK; ATP binding to DnaK triggers the release of the substrate protein, thus completing the reaction cycle. Several rounds of ATP-dependent interactions between DnaJ, DnaK and GrpE are required for fully efficient folding. The chain is Protein GrpE from Clostridium acetobutylicum (strain ATCC 824 / DSM 792 / JCM 1419 / IAM 19013 / LMG 5710 / NBRC 13948 / NRRL B-527 / VKM B-1787 / 2291 / W).